Consider the following 54-residue polypeptide: Conotoxin Cal6.17 (54 aa).

Residues 1–19 (MSGTGVLLLTLLLLVTMAT) form the signal peptide. 3 disulfide bridges follow: Cys-24–Cys-39, Cys-32–Cys-49, and Cys-38–Cys-53.

In terms of tissue distribution, expressed by the venom duct.

It localises to the secreted. Probable neurotoxin. This is Conotoxin Cal6.17 from Californiconus californicus (California cone).